Here is a 242-residue protein sequence, read N- to C-terminus: Caspase-14 (242 aa).

The propeptide occupies 1 to 5 (MSNPR). Active-site residues include His-89 and Cys-132. Positions 147–152 (EIVMVI) are excised as a propeptide.

It belongs to the peptidase C14A family. Heterodimer of a large and a small subunit, both processed from the precursor; the mature active form is a p17/p10 dimer and the intermediate form a p20/p8 dimer. In terms of processing, maturation by proteolytic processing appears to be a two-step process. The precursor is processed by KLK7 to yield the p20/p8 intermediate form which acts on the precursor to yield the p17/p10 mature form. Initially, cleavage between Ile-152 and Lys-153 has been proposed to yield the large and small subunits of the active enzyme. As to expression, expressed in keratinocytes of adult skin suprabasal layers (from spinous layers to the stratum granulosum and stratum corneum) (at protein level). Expressed in keratinocytes of hair shaft and sebaceous glands (at protein level). In psoriatic skin only expressed at very low levels. The p17/10 mature form is expressed in epidermis stratum corneum, the p20/p8 intermediate form in epidermis upper granular cells of the stratum granulosum.

The protein localises to the cytoplasm. It is found in the nucleus. With respect to regulation, inhibited by caspase-1 inhibitor YVAD-FMK and the pan-caspase inhibitor VAD-FMK. Non-apoptotic caspase involved in epidermal differentiation. Is the predominant caspase in epidermal stratum corneum. Seems to play a role in keratinocyte differentiation and is required for cornification. Regulates maturation of the epidermis by proteolytically processing filaggrin. In vitro has a preference for the substrate [WY]-X-X-D motif and is active on the synthetic caspase substrate WEHD-ACF. Involved in processing of prosaposin in the epidermis. May be involved in retinal pigment epithelium cell barrier function. Involved in DNA degradation in differentiated keratinocytes probably by cleaving DFFA/ICAD leading to liberation of DFFB/CAD. The sequence is that of Caspase-14 (CASP14) from Homo sapiens (Human).